The chain runs to 379 residues: MKYELVSTDGRARRGRLIFERGVVETPAFMPVGTYGTVKGMTPEEVAQTGAQILLGNTFHLWLRPGQEIMKLHGDLHDFMQWPGPILTDSGGFQVFSLGAMRKIKEEGVYFRNPINGSPVFLSPEKSMEIQYDLGSDIVMIFDECTPYPADWDYAKRSMEMSLRWAKRSRQRFDELGNQNALFGIIQGSVYEDLRDVSLKGLVEIGFDGYAVGGLAVGEPKEDMHRILEHVCPMIPQDKPRYLMGVGKPEDLVEGVRRGIDMFDCVMPTRNARNGHLFVTGGVVKIRNAQYKEDTTALDPECDCYTCRNYSRAYLHHLDRCNEILGARLNTIHNLRYYQRLMAALRQAIEEGKLERFAADFYGRRGRTVPPLGAADAAS.

Asp89 acts as the Proton acceptor in catalysis. Residues 89 to 93 (DSGGF), Asp143, Gln187, and Gly214 each bind substrate. Residues 245 to 251 (GVGKPED) are RNA binding. Asp264 acts as the Nucleophile in catalysis. An RNA binding; important for wobble base 34 recognition region spans residues 269 to 273 (TRNAR). Residues Cys302, Cys304, Cys307, and His333 each coordinate Zn(2+).

The protein belongs to the queuine tRNA-ribosyltransferase family. Homodimer. Within each dimer, one monomer is responsible for RNA recognition and catalysis, while the other monomer binds to the replacement base PreQ1. Zn(2+) serves as cofactor.

The catalysed reaction is 7-aminomethyl-7-carbaguanine + guanosine(34) in tRNA = 7-aminomethyl-7-carbaguanosine(34) in tRNA + guanine. The protein operates within tRNA modification; tRNA-queuosine biosynthesis. Catalyzes the base-exchange of a guanine (G) residue with the queuine precursor 7-aminomethyl-7-deazaguanine (PreQ1) at position 34 (anticodon wobble position) in tRNAs with GU(N) anticodons (tRNA-Asp, -Asn, -His and -Tyr). Catalysis occurs through a double-displacement mechanism. The nucleophile active site attacks the C1' of nucleotide 34 to detach the guanine base from the RNA, forming a covalent enzyme-RNA intermediate. The proton acceptor active site deprotonates the incoming PreQ1, allowing a nucleophilic attack on the C1' of the ribose to form the product. After dissociation, two additional enzymatic reactions on the tRNA convert PreQ1 to queuine (Q), resulting in the hypermodified nucleoside queuosine (7-(((4,5-cis-dihydroxy-2-cyclopenten-1-yl)amino)methyl)-7-deazaguanosine). The chain is Queuine tRNA-ribosyltransferase from Edwardsiella ictaluri (strain 93-146).